The sequence spans 809 residues: Sucrose synthase 3 (809 aa).

Residues methionine 277–threonine 755 form a GT-B glycosyltransferase region.

It belongs to the glycosyltransferase 1 family. Plant sucrose synthase subfamily. Detected in the whole plant with highest expression in developing siliques, vasculature of cotyledons and stomatal guard cells. Also detected throughout the mature parts of the root but not in the expanding zone.

The enzyme catalyses an NDP-alpha-D-glucose + D-fructose = a ribonucleoside 5'-diphosphate + sucrose + H(+). Functionally, sucrose-cleaving enzyme that provides UDP-glucose and fructose for various metabolic pathways. Modulates metabolic homeostasis and direct carbon towards starch synthesis in developing seeds. The chain is Sucrose synthase 3 (SUS3) from Arabidopsis thaliana (Mouse-ear cress).